Consider the following 62-residue polypeptide: U10-buthitoxin-Hj1a (62 aa).

An N-terminal signal peptide occupies residues 1-22; that stretch reads MQKIFIILVLFCILKFNVDVEG. 3 disulfides stabilise this stretch: C28-C46, C33-C59, and C37-C61.

Belongs to the short scorpion toxin superfamily. Potassium channel inhibitor family. Alpha-KTx 23 subfamily. In terms of tissue distribution, expressed by the venom gland.

Its subcellular location is the secreted. May block potassium channels. This chain is U10-buthitoxin-Hj1a, found in Hottentotta judaicus (Black scorpion).